The chain runs to 217 residues: Thiamine-phosphate synthase (217 aa).

4-amino-2-methyl-5-(diphosphooxymethyl)pyrimidine contacts are provided by residues 39 to 43 (QLRRK) and N71. Residues D72 and D91 each coordinate Mg(2+). S110 serves as a coordination point for 4-amino-2-methyl-5-(diphosphooxymethyl)pyrimidine. Residue 137-139 (SPT) participates in 2-[(2R,5Z)-2-carboxy-4-methylthiazol-5(2H)-ylidene]ethyl phosphate binding. K140 serves as a coordination point for 4-amino-2-methyl-5-(diphosphooxymethyl)pyrimidine. Residues G173 and 193–194 (IS) contribute to the 2-[(2R,5Z)-2-carboxy-4-methylthiazol-5(2H)-ylidene]ethyl phosphate site.

It belongs to the thiamine-phosphate synthase family. The cofactor is Mg(2+).

It carries out the reaction 2-[(2R,5Z)-2-carboxy-4-methylthiazol-5(2H)-ylidene]ethyl phosphate + 4-amino-2-methyl-5-(diphosphooxymethyl)pyrimidine + 2 H(+) = thiamine phosphate + CO2 + diphosphate. The enzyme catalyses 2-(2-carboxy-4-methylthiazol-5-yl)ethyl phosphate + 4-amino-2-methyl-5-(diphosphooxymethyl)pyrimidine + 2 H(+) = thiamine phosphate + CO2 + diphosphate. The catalysed reaction is 4-methyl-5-(2-phosphooxyethyl)-thiazole + 4-amino-2-methyl-5-(diphosphooxymethyl)pyrimidine + H(+) = thiamine phosphate + diphosphate. It participates in cofactor biosynthesis; thiamine diphosphate biosynthesis; thiamine phosphate from 4-amino-2-methyl-5-diphosphomethylpyrimidine and 4-methyl-5-(2-phosphoethyl)-thiazole: step 1/1. Condenses 4-methyl-5-(beta-hydroxyethyl)thiazole monophosphate (THZ-P) and 2-methyl-4-amino-5-hydroxymethyl pyrimidine pyrophosphate (HMP-PP) to form thiamine monophosphate (TMP). The sequence is that of Thiamine-phosphate synthase from Bordetella parapertussis (strain 12822 / ATCC BAA-587 / NCTC 13253).